We begin with the raw amino-acid sequence, 765 residues long: Spastin (765 aa).

Residues 1-94 (MVRTKNQSSS…TSGYGPRGGT (94 aa)) form a disordered region. Over 1–107 (MVRTKNQSSS…KQNLYVVSFP (107 aa)) the chain is Cytoplasmic. Residues 1–195 (MVRTKNQSSS…ALLPLEMATN (195 aa)) form a required for localization to punctate cytoplasmic foci region. Positions 8–19 (SSSSSASSSTKS) are enriched in low complexity. The segment covering 48-58 (SSKLSSNRQRA) has biased composition (polar residues). Over residues 59 to 72 (TITTTTTSTTPGSS) the composition is skewed to low complexity. Residues 108–128 (IIFLFNVLRSLIYQLFCIFRY) constitute an intramembrane region (helical). At 129–765 (LYCASTKVIY…WSQDYGDITI (637 aa)) the chain is on the cytoplasmic side. Residues 193-765 (ATNRGGSGGY…WSQDYGDITI (573 aa)) are sufficient for interaction with microtubules and microtubule severing. Residues 218 to 293 (HRRAFEYISK…SMARDRLHFL (76 aa)) enclose the MIT domain. The disordered stretch occupies residues 329-462 (QTNSKAAAVE…GSGSGASTPM (134 aa)). Over residues 355–364 (SGTGSSAGTS) the composition is skewed to low complexity. 2 stretches are compositionally biased toward polar residues: residues 389–407 (NKSQ…STSV) and 428–444 (QFSS…RTPI). Positions 446-462 (NNAASGSGSGSGASTPM) are required for interaction with microtubules. 530-537 (GPPGNGKT) contributes to the ATP binding site.

The protein belongs to the AAA ATPase family. Spastin subfamily. Homohexamer. The homohexamer is stabilized by ATP-binding. The homohexamer may adopt a ring conformation through which microtubules pass prior to being severed. Interacts with microtubules. Interacts with atl; may be involved in microtubule dynamics.

The protein resides in the membrane. The protein localises to the cytoplasm. It localises to the cytoskeleton. It is found in the microtubule organizing center. Its subcellular location is the centrosome. The protein resides in the chromosome. The protein localises to the lipid droplet. The enzyme catalyses n ATP + n H2O + a microtubule = n ADP + n phosphate + (n+1) alpha/beta tubulin heterodimers.. ATP-dependent microtubule severing protein. Stimulates microtubule minus-end depolymerization and poleward microtubule flux in the mitotic spindle. Regulates microtubule stability in the neuromuscular junction synapse. Involved in lipid metabolism by regulating the size and distribution of lipid droplets. Involved in axon regeneration by regulating microtubule severing. In Drosophila mojavensis (Fruit fly), this protein is Spastin.